We begin with the raw amino-acid sequence, 227 residues long: 2,3-bisphosphoglycerate-dependent phosphoglycerate mutase (227 aa).

Residues 7–14 (RHGFSEWN), 20–21 (TG), R59, 86–89 (ERHY), K97, 113–114 (RR), and 182–183 (GN) contribute to the substrate site. H8 serves as the catalytic Tele-phosphohistidine intermediate. Catalysis depends on E86, which acts as the Proton donor/acceptor.

It belongs to the phosphoglycerate mutase family. BPG-dependent PGAM subfamily. Homodimer.

It catalyses the reaction (2R)-2-phosphoglycerate = (2R)-3-phosphoglycerate. The protein operates within carbohydrate degradation; glycolysis; pyruvate from D-glyceraldehyde 3-phosphate: step 3/5. Catalyzes the interconversion of 2-phosphoglycerate and 3-phosphoglycerate. In Haemophilus influenzae (strain PittGG), this protein is 2,3-bisphosphoglycerate-dependent phosphoglycerate mutase.